A 122-amino-acid chain; its full sequence is Large ribosomal subunit protein uL14 (122 aa).

This sequence belongs to the universal ribosomal protein uL14 family. As to quaternary structure, part of the 50S ribosomal subunit. Forms a cluster with proteins L3 and L19. In the 70S ribosome, L14 and L19 interact and together make contacts with the 16S rRNA in bridges B5 and B8. Interacts with ribosomal silencing factor RsfS, which may inhibit ribosomal subunit association.

Functionally, binds to 23S rRNA. Forms part of two intersubunit bridges in the 70S ribosome. The chain is Large ribosomal subunit protein uL14 from Treponema pallidum (strain Nichols).